Consider the following 137-residue polypeptide: Large ribosomal subunit protein uL16 (137 aa).

This sequence belongs to the universal ribosomal protein uL16 family. Part of the 50S ribosomal subunit.

Binds 23S rRNA and is also seen to make contacts with the A and possibly P site tRNAs. The protein is Large ribosomal subunit protein uL16 of Stenotrophomonas maltophilia (strain K279a).